A 795-amino-acid chain; its full sequence is Putative replication origin-binding protein (795 aa).

In terms of domain architecture, Helicase ATP-binding spans W121–N289. Residue S134 to T141 coordinates ATP.

The protein belongs to the mimivirus R1 family.

Its function is as follows. Probably involved in DNA replication. May bind the genome origin of replication (ori). This Acanthamoeba polyphaga (Amoeba) protein is Putative replication origin-binding protein.